Here is a 738-residue protein sequence, read N- to C-terminus: 1,4-alpha-glucan branching enzyme GlgB (738 aa).

The Nucleophile role is filled by Asp-417. The active-site Proton donor is Glu-472.

Belongs to the glycosyl hydrolase 13 family. GlgB subfamily. Monomer.

The catalysed reaction is Transfers a segment of a (1-&gt;4)-alpha-D-glucan chain to a primary hydroxy group in a similar glucan chain.. It participates in glycan biosynthesis; glycogen biosynthesis. Functionally, catalyzes the formation of the alpha-1,6-glucosidic linkages in glycogen by scission of a 1,4-alpha-linked oligosaccharide from growing alpha-1,4-glucan chains and the subsequent attachment of the oligosaccharide to the alpha-1,6 position. The chain is 1,4-alpha-glucan branching enzyme GlgB from Burkholderia pseudomallei (strain 1106a).